The following is a 2841-amino-acid chain: Neurofibromin (2841 aa).

Alanine 2 is modified (N-acetylalanine). Phosphoserine occurs at positions 866 and 878. The Ras-GAP domain maps to 1253-1484 (HLLYQLLWNM…DLARRFFLDI (232 aa)). Residues 1582–1740 (EKEEFKALKT…ATLALEEDLK (159 aa)) enclose the CRAL-TRIO domain. The tract at residues 1582–1839 (EKEEFKALKT…RTRWELSQPD (258 aa)) is lipid binding. A phosphoserine mark is found at serine 2190 and serine 2469. Threonine 2516 bears the Phosphothreonine mark. Phosphoserine occurs at positions 2517, 2523, 2525, and 2545. A Bipartite nuclear localization signal motif is present at residues 2557-2573 (KRQEMESGITTPPKMRR). Residue threonine 2567 is modified to Phosphothreonine. 3 positions are modified to phosphoserine: serine 2599, serine 2804, and serine 2819. Positions 2786–2841 (SLATSQHSPGLDKENVELSPTAGHCNSGRTRHGSASQVQKQRSAGSFKRNSIKKIV) are disordered. Positions 2818 to 2829 (GSASQVQKQRSA) are enriched in polar residues.

As to quaternary structure, interacts with HTR6. Interacts with SPRED2. In terms of processing, ubiquitinated by RNF7/RBX2, leading to its degradation. In terms of tissue distribution, expressed predominantly in brain, spinal cord and testis. As to expression, expressed predominantly in adrenal gland, kidney, ovary and lung. Widely and more weakly expressed. Predominantly expressed in adrenal gland. In terms of tissue distribution, widely and more weakly expressed. Expressed mainly in testis.

It is found in the nucleus. Its subcellular location is the nucleolus. The protein resides in the cell membrane. In terms of biological role, stimulates the GTPase activity of Ras. NF1 shows greater affinity for Ras GAP, but lower specific activity. May be a regulator of Ras activity. The chain is Neurofibromin (Nf1) from Mus musculus (Mouse).